We begin with the raw amino-acid sequence, 290 residues long: UPF0761 membrane protein YihY (290 aa).

The next 6 helical transmembrane spans lie at 44 to 64 (LLSL…FPMF), 104 to 124 (VGAC…DSAL), 140 to 160 (FAVY…SLAI), 183 to 203 (IFPL…VPTI), 210 to 230 (AIVG…GFAL), and 244 to 264 (VLAV…IVLL).

Belongs to the UPF0761 family.

The protein resides in the cell inner membrane. This chain is UPF0761 membrane protein YihY, found in Escherichia coli O1:K1 / APEC.